The sequence spans 210 residues: Putative O-methyltransferase MSMEG_5073/MSMEI_4947 (210 aa).

Residues Val37, Glu59, 61–62, Ser67, Asp85, and Val86 contribute to the S-adenosyl-L-methionine site; that span reads GT. Position 133 (Asp133) interacts with substrate. Residue Asp135 coordinates S-adenosyl-L-methionine.

The protein belongs to the class I-like SAM-binding methyltransferase superfamily. Cation-dependent O-methyltransferase family.

The protein is Putative O-methyltransferase MSMEG_5073/MSMEI_4947 of Mycolicibacterium smegmatis (strain ATCC 700084 / mc(2)155) (Mycobacterium smegmatis).